The following is a 949-amino-acid chain: AP-1 complex subunit beta-1 (949 aa).

Lys-318 bears the N6-acetyllysine mark. The residue at position 574 (Tyr-574) is a 3'-nitrotyrosine. A disordered region spans residues 592–623 (SLPPRTASSESTESPEAAPAGAPASDQPDVIP). The span at 594-616 (PPRTASSESTESPEAAPAGAPAS) shows a compositional bias: low complexity.

It belongs to the adaptor complexes large subunit family. In terms of assembly, adaptor protein complex 1 (AP-1) is a heterotetramer composed of two large adaptins (gamma-type subunit AP1G1 and beta-type subunit AP1B1), a medium adaptin (mu-type subunit AP1M1 or AP1M2) and a small adaptin (sigma-type subunit AP1S1 or AP1S2 or AP1S3). Post-translationally, the N-terminus is blocked.

The protein localises to the golgi apparatus. It is found in the cytoplasmic vesicle. It localises to the clathrin-coated vesicle membrane. In terms of biological role, subunit of clathrin-associated adaptor protein complex 1 that plays a role in protein sorting in the late-Golgi/trans-Golgi network (TGN) and/or endosomes. The AP complexes mediate both the recruitment of clathrin to membranes and the recognition of sorting signals within the cytosolic tails of transmembrane cargo molecules. The protein is AP-1 complex subunit beta-1 (Ap1b1) of Rattus norvegicus (Rat).